The sequence spans 229 residues: Cytochrome c oxidase subunit 2 (229 aa).

Over 1 to 26 the chain is Mitochondrial intermembrane; sequence MANWTQLGLQDASSPLMEELIYFHDY. The chain crosses the membrane as a helical span at residues 27–48; it reads TLIILTLITILVFYGLASLLFS. Topologically, residues 49 to 62 are mitochondrial matrix; that stretch reads SNTNRFFLEGQGLE. The chain crosses the membrane as a helical span at residues 63–82; that stretch reads TVWTIIPAVILIFIALPSLQ. Topologically, residues 83 to 229 are mitochondrial intermembrane; the sequence is LLYLMDEVNN…ETWVSNFITE (147 aa). Cu cation is bound by residues His161, Cys196, Glu198, Cys200, His204, and Met207. Mg(2+) is bound at residue Glu198.

The protein belongs to the cytochrome c oxidase subunit 2 family. Component of the cytochrome c oxidase (complex IV, CIV), a multisubunit enzyme composed of a catalytic core of 3 subunits and several supernumerary subunits. The complex exists as a monomer or a dimer and forms supercomplexes (SCs) in the inner mitochondrial membrane with ubiquinol-cytochrome c oxidoreductase (cytochrome b-c1 complex, complex III, CIII). Cu cation serves as cofactor.

The protein resides in the mitochondrion inner membrane. It catalyses the reaction 4 Fe(II)-[cytochrome c] + O2 + 8 H(+)(in) = 4 Fe(III)-[cytochrome c] + 2 H2O + 4 H(+)(out). Component of the cytochrome c oxidase, the last enzyme in the mitochondrial electron transport chain which drives oxidative phosphorylation. The respiratory chain contains 3 multisubunit complexes succinate dehydrogenase (complex II, CII), ubiquinol-cytochrome c oxidoreductase (cytochrome b-c1 complex, complex III, CIII) and cytochrome c oxidase (complex IV, CIV), that cooperate to transfer electrons derived from NADH and succinate to molecular oxygen, creating an electrochemical gradient over the inner membrane that drives transmembrane transport and the ATP synthase. Cytochrome c oxidase is the component of the respiratory chain that catalyzes the reduction of oxygen to water. Electrons originating from reduced cytochrome c in the intermembrane space (IMS) are transferred via the dinuclear copper A center (CU(A)) of subunit 2 and heme A of subunit 1 to the active site in subunit 1, a binuclear center (BNC) formed by heme A3 and copper B (CU(B)). The BNC reduces molecular oxygen to 2 water molecules using 4 electrons from cytochrome c in the IMS and 4 protons from the mitochondrial matrix. The polypeptide is Cytochrome c oxidase subunit 2 (COII) (Patiria pectinifera (Starfish)).